The sequence spans 390 residues: Putative nickel insertion protein (390 aa).

Belongs to the LarC family.

The chain is Putative nickel insertion protein from Geobacter metallireducens (strain ATCC 53774 / DSM 7210 / GS-15).